We begin with the raw amino-acid sequence, 720 residues long: 1,4-alpha-glucan branching enzyme GlgB (720 aa).

Catalysis depends on Asp-400, which acts as the Nucleophile. Glu-453 (proton donor) is an active-site residue.

Belongs to the glycosyl hydrolase 13 family. GlgB subfamily. In terms of assembly, monomer.

The enzyme catalyses Transfers a segment of a (1-&gt;4)-alpha-D-glucan chain to a primary hydroxy group in a similar glucan chain.. It participates in glycan biosynthesis; glycogen biosynthesis. Functionally, catalyzes the formation of the alpha-1,6-glucosidic linkages in glycogen by scission of a 1,4-alpha-linked oligosaccharide from growing alpha-1,4-glucan chains and the subsequent attachment of the oligosaccharide to the alpha-1,6 position. In Chlamydia pneumoniae (Chlamydophila pneumoniae), this protein is 1,4-alpha-glucan branching enzyme GlgB.